A 1191-amino-acid polypeptide reads, in one-letter code: Homeodomain-interacting protein kinase 3 (1191 aa).

Lysine 27 participates in a covalent cross-link: Glycyl lysine isopeptide (Lys-Gly) (interchain with G-Cter in SUMO2). In terms of domain architecture, Protein kinase spans 197 to 525; sequence YEVLDFLGRG…PIETLNHPFV (329 aa). ATP-binding positions include 203–211 and lysine 226; that span reads LGRGTFGQV. Catalysis depends on aspartate 322, which acts as the Proton acceptor. A Phosphotyrosine modification is found at tyrosine 359. Positions 766-920 are interaction with AR; the sequence is QNRSNSLQNT…NSMSDDEQES (155 aa). The interaction with FAS stretch occupies residues 774 to 867; the sequence is NTNVPHSAFI…SPRPSLRECK (94 aa). The segment at 801 to 828 is disordered; sequence TQDNHTSEGEARTCHEASVRQDSSVSDK. Basic and acidic residues predominate over residues 802–828; the sequence is QDNHTSEGEARTCHEASVRQDSSVSDK. Residues 846–856 form an interaction with UBL1 region; that stretch reads ITISSDTDDEE. Low complexity predominate over residues 888-905; the sequence is SSPDSTLSTSSSGQSSPS. 2 disordered regions span residues 888–960 and 993–1022; these read SSPD…TCAG and TCQPLTKGQPAPGKLNQPSASAARQQKPTS. The span at 1008–1022 shows a compositional bias: polar residues; the sequence is NQPSASAARQQKPTS.

It belongs to the protein kinase superfamily. CMGC Ser/Thr protein kinase family. HIPK subfamily. In terms of assembly, interacts with Nkx1-2. Interacts with FAS and DAXX. Probably part of a complex consisting of HIPK3, FAS and FADD. Interacts with UBL1/SUMO-1. Interacts with and stabilizes ligand-bound androgen receptor (AR). In terms of processing, autophosphorylated. Autophosphorylation is not required for catalytic activity. May be sumoylated.

Its subcellular location is the nucleus. The enzyme catalyses L-seryl-[protein] + ATP = O-phospho-L-seryl-[protein] + ADP + H(+). It catalyses the reaction L-threonyl-[protein] + ATP = O-phospho-L-threonyl-[protein] + ADP + H(+). Its function is as follows. Seems to negatively regulate apoptosis by promoting FADD phosphorylation. Enhances androgen receptor-mediated transcription. May act as a transcriptional corepressor for NK homeodomain transcription factors. In Rattus norvegicus (Rat), this protein is Homeodomain-interacting protein kinase 3 (Hipk3).